The chain runs to 286 residues: Release factor glutamine methyltransferase (286 aa).

Residues 121–125, D144, W172, and N188 each bind S-adenosyl-L-methionine; that span reads GTGTG. Residue 188–191 participates in substrate binding; sequence NPPY.

This sequence belongs to the protein N5-glutamine methyltransferase family. PrmC subfamily.

It catalyses the reaction L-glutaminyl-[peptide chain release factor] + S-adenosyl-L-methionine = N(5)-methyl-L-glutaminyl-[peptide chain release factor] + S-adenosyl-L-homocysteine + H(+). Its function is as follows. Methylates the class 1 translation termination release factors RF1/PrfA and RF2/PrfB on the glutamine residue of the universally conserved GGQ motif. The chain is Release factor glutamine methyltransferase from Vibrio cholerae serotype O1 (strain ATCC 39315 / El Tor Inaba N16961).